The following is a 286-amino-acid chain: 2,3,4,5-tetrahydropyridine-2,6-dicarboxylate N-succinyltransferase (286 aa).

The protein belongs to the transferase hexapeptide repeat family.

It localises to the cytoplasm. It carries out the reaction (S)-2,3,4,5-tetrahydrodipicolinate + succinyl-CoA + H2O = (S)-2-succinylamino-6-oxoheptanedioate + CoA. The protein operates within amino-acid biosynthesis; L-lysine biosynthesis via DAP pathway; LL-2,6-diaminopimelate from (S)-tetrahydrodipicolinate (succinylase route): step 1/3. The protein is 2,3,4,5-tetrahydropyridine-2,6-dicarboxylate N-succinyltransferase of Rhizobium leguminosarum bv. trifolii (strain WSM2304).